The sequence spans 161 residues: Small ribosomal subunit protein uS8m (161 aa).

This sequence belongs to the universal ribosomal protein uS8 family. Component of the mitochondrial small ribosomal subunit (mt-SSU). Mature N.crassa 74S mitochondrial ribosomes consist of a small (37S) and a large (54S) subunit. The 37S small subunit contains a 16S ribosomal RNA (16S mt-rRNA) and 32 different proteins. The 54S large subunit contains a 23S rRNA (23S mt-rRNA) and 42 different proteins.

It is found in the mitochondrion. In terms of biological role, component of the mitochondrial ribosome (mitoribosome), a dedicated translation machinery responsible for the synthesis of mitochondrial genome-encoded proteins, including at least some of the essential transmembrane subunits of the mitochondrial respiratory chain. The mitoribosomes are attached to the mitochondrial inner membrane and translation products are cotranslationally integrated into the membrane. The sequence is that of Small ribosomal subunit protein uS8m (mrps8) from Neurospora crassa (strain ATCC 24698 / 74-OR23-1A / CBS 708.71 / DSM 1257 / FGSC 987).